The primary structure comprises 811 residues: Glycerol-3-phosphate acyltransferase (811 aa).

An HXXXXD motif motif is present at residues 308-313; it reads CHRSHM.

Belongs to the GPAT/DAPAT family.

Its subcellular location is the cell inner membrane. The enzyme catalyses sn-glycerol 3-phosphate + an acyl-CoA = a 1-acyl-sn-glycero-3-phosphate + CoA. Its pathway is phospholipid metabolism; CDP-diacylglycerol biosynthesis; CDP-diacylglycerol from sn-glycerol 3-phosphate: step 1/3. This is Glycerol-3-phosphate acyltransferase from Pseudoalteromonas atlantica (strain T6c / ATCC BAA-1087).